The chain runs to 204 residues: Regulatory protein RecX (204 aa).

The segment covering 1 to 22 (MTKSSRPQSISDSVSVAGSQGT) has biased composition (polar residues). Residues 1–44 (MTKSSRPQSISDSVSVAGSQGTLDDLRARVASVPEAPTREPVDS) form a disordered region.

Belongs to the RecX family.

The protein localises to the cytoplasm. Functionally, modulates RecA activity. The protein is Regulatory protein RecX of Mycobacteroides abscessus (strain ATCC 19977 / DSM 44196 / CCUG 20993 / CIP 104536 / JCM 13569 / NCTC 13031 / TMC 1543 / L948) (Mycobacterium abscessus).